Reading from the N-terminus, the 98-residue chain is Small ribosomal subunit protein bS6 (98 aa).

The protein belongs to the bacterial ribosomal protein bS6 family.

Binds together with bS18 to 16S ribosomal RNA. The sequence is that of Small ribosomal subunit protein bS6 from Staphylococcus aureus (strain NCTC 8325 / PS 47).